An 885-amino-acid polypeptide reads, in one-letter code: Cytosolic carboxypeptidase-like protein 5 (885 aa).

The Peptidase M14 domain occupies 150–576 (YPFSYAECQD…AVAVAALDMA (427 aa)). Zn(2+) contacts are provided by H247 and E250. Disordered regions lie at residues 341–364 (SGSALKTSNQSNTSPPVATPTERE) and 392–428 (ESWEKSGVQREAEHSDENESAQSRGETNSAPSEQVPP). Polar residues predominate over residues 344–356 (ALKTSNQSNTSPP). Over residues 393 to 408 (SWEKSGVQREAEHSDE) the composition is skewed to basic and acidic residues. Polar residues predominate over residues 411 to 428 (SAQSRGETNSAPSEQVPP). Zn(2+) is bound at residue H440. E522 acts as the Proton donor/acceptor in catalysis. Residues 606–668 (STGLTSNNRR…KSSPSFTFGT (63 aa)) show a composition bias toward polar residues. Disordered regions lie at residues 606-788 (STGL…RTAL) and 866-885 (ALLKNSSRQTDQHIHRSLPT). Basic and acidic residues predominate over residues 682–691 (RECKAQEKRR). Positions 712–749 (LSAPVRAPLSPSSSSSSSSSSPSSSSSAPGPGSISLAG) are enriched in low complexity.

The protein belongs to the peptidase M14 family. Requires Zn(2+) as cofactor.

Its subcellular location is the cytoplasm. It is found in the cytosol. The protein localises to the nucleus. It localises to the cytoskeleton. The protein resides in the spindle. Its subcellular location is the midbody. It carries out the reaction gamma-L-glutamyl-L-glutamyl-[protein] + H2O = L-glutamyl-[protein] + L-glutamate. The catalysed reaction is (L-glutamyl)(n+1)-gamma-L-glutamyl-L-glutamyl-[protein] + H2O = (L-glutamyl)(n)-gamma-L-glutamyl-L-glutamyl-[protein] + L-glutamate. It catalyses the reaction C-terminal L-alpha-aminoacyl-L-glutamyl-[tubulin] + H2O = C-terminal L-alpha-aminoacyl-[tubulin] + L-glutamate. The enzyme catalyses C-terminal L-alpha-aminoacyl-L-glutamyl-L-glutamyl-[tubulin] + H2O = C-terminal L-alpha-aminoacyl-L-glutamyl-[tubulin] + L-glutamate. In terms of biological role, metallocarboxypeptidase that mediates deglutamylation of tubulin and non-tubulin target proteins. Catalyzes the removal of polyglutamate side chains present on the gamma-carboxyl group of glutamate residues within the C-terminal tail of alpha- and beta-tubulin. Cleaves alpha- and gamma-linked polyglutamate tubulin side-chain, as well as the branching point glutamate. Also catalyzes the removal of alpha-linked glutamate residues from the carboxy-terminus of alpha-tubulin. The protein is Cytosolic carboxypeptidase-like protein 5 (agbl5) of Danio rerio (Zebrafish).